A 272-amino-acid chain; its full sequence is uncharacterized protein (272 aa).

An N-terminal signal peptide occupies residues 1-20 (MMEPKSIFLLGLLLFRVGKL).

This is an uncharacterized protein from Caenorhabditis elegans.